Consider the following 1174-residue polypeptide: MKIDSLKEKLNIFKIPLNGIKLIEASAGTGKTFTIVLLYLRLLLGIGEKKIYKKKLLVHEILVVTFTNKAKEELYIRIKDGIQNMYLTCINKTTSDSSFQFFFKEIHDIKEAIYVLKRAQNDMNSSSIYTIHSFCQHILQLHTFHFNDIFEEKIIENEDNLYLQATQDFWRRFFYTLPEDIIKIIYQDYKSPDHLLKTIKPFFYIKSINFPTKILNNKKLIMYHEENIKKIIFFKEMWLIYHKIIQKTINDLEINKKIYSKFNLIKWINKITEWAKSETKDYTIPSILKYFTKKNIEKNTINNTCSKYIIFEESEKILKKKFSLKNVIIIYAVKKIHQFLLKEKKKKSLIGFNDLLSILLKTIKKEKFLKDLIIKKYPAAFIDEFQDTDIQQYKIFNLLYKKNKTTVLFLIGDPKQAIYSFRGADIFSYLYAKSKIKKYYYLDTNWRSSINICKSINFLFSQNINPFIFKNIPYIPVVPSSKNLKMNFTINDVAQTPISFFLQEEKEVSIDDYQVWISKQCANEISFWLTCAKTGKAKITTKNGEKILTANDIAILVRNRKEADLIQDELEKLNIISIYSSNKNSVFQTLDAQELLWILESILEPENEILLQQSMASHILKKLSLVVENKTISNKNSYFIIEKLYEYHDIWEKIGVFQMIKIMILEYQKNSFCTEINENHIKNLNFLHIGELLQEQFQFFHKKISLIRWFQKKISTKTQPEYNESIKCFDESPSIKIITIHKSKGLEYPIVWIPFSIDFKKSTLAIYHDQKSLKTFFDENYSNKFLKIADEERLAEDIRFLYVALTRSILHCSIGLACLIKKIIKNRNNSDIHQSGLGFTIQGGKTMNYEGLLEKLKKLSINNFIEVKNNTDNFSFSRKPQTISLICKNKFLNKKNIRNTWSITSFSQLNKINKLSKHHQKEVALKELCIKNQEKKNQSLLTIHNFPKGKKTGLMIHYILKNLHVLKNKNSNWFSCILEKYNIHIKWTSVLIYWIKNIINTPLNDEKIILSRIDEKSSIRELEFFFPIKNMLYSTELNKIIQSINPTSITSPQLSFNPVKGMLTGFVDLVFIWKKKYYILDYKSNWLGKNNNFYSSIHINKEIVKKRYHLQYQIYTIAIHKYLQKKLKNYNYKDDFGGVFYFFLRAIDCPKKNNGIFYTMPNYSLIKKTMTLIS.

The segment at 1–852 is DNA-binding and helicase activity, interacts with RecC; the sequence is MKIDSLKEKL…GGKTMNYEGL (852 aa). The UvrD-like helicase ATP-binding domain maps to 4 to 449; that stretch reads DSLKEKLNIF…YYLDTNWRSS (446 aa). 25–32 is a binding site for ATP; sequence ASAGTGKT. Positions 479–745 constitute a UvrD-like helicase C-terminal domain; it reads PSSKNLKMNF…KIITIHKSKG (267 aa). Residues 900–1174 form a nuclease activity, interacts with RecD and RecA region; sequence TWSITSFSQL…LIKKTMTLIS (275 aa). The Mg(2+) site is built by His957, Asp1068, and Asp1081. Asp1081 acts as the For nuclease activity in catalysis.

This sequence belongs to the helicase family. UvrD subfamily. As to quaternary structure, heterotrimer of RecB, RecC and RecD. All subunits contribute to DNA-binding. Interacts with RecA. Mg(2+) serves as cofactor.

The enzyme catalyses Exonucleolytic cleavage (in the presence of ATP) in either 5'- to 3'- or 3'- to 5'-direction to yield 5'-phosphooligonucleotides.. It carries out the reaction Couples ATP hydrolysis with the unwinding of duplex DNA by translocating in the 3'-5' direction.. It catalyses the reaction ATP + H2O = ADP + phosphate + H(+). In terms of biological role, a helicase/nuclease that prepares dsDNA breaks (DSB) for recombinational DNA repair. Binds to DSBs and unwinds DNA via a highly rapid and processive ATP-dependent bidirectional helicase activity. Unwinds dsDNA until it encounters a Chi (crossover hotspot instigator) sequence from the 3' direction. Cuts ssDNA a few nucleotides 3' to the Chi site. The properties and activities of the enzyme are changed at Chi. The Chi-altered holoenzyme produces a long 3'-ssDNA overhang and facilitates RecA-binding to the ssDNA for homologous DNA recombination and repair. Holoenzyme degrades any linearized DNA that is unable to undergo homologous recombination. In the holoenzyme this subunit contributes ATPase, 3'-5' helicase, exonuclease activity and loads RecA onto ssDNA. In Buchnera aphidicola subsp. Acyrthosiphon pisum (strain APS) (Acyrthosiphon pisum symbiotic bacterium), this protein is RecBCD enzyme subunit RecB.